A 187-amino-acid chain; its full sequence is Adenine phosphoribosyltransferase 1 (187 aa).

Position 68 is a phosphoserine (Ser68). Position 133-137 (133-137) interacts with AMP; that stretch reads ATGGS.

Belongs to the purine/pyrimidine phosphoribosyltransferase family. Homodimer. Mg(2+) serves as cofactor.

It localises to the cytoplasm. The protein resides in the nucleus. The enzyme catalyses AMP + diphosphate = 5-phospho-alpha-D-ribose 1-diphosphate + adenine. Its pathway is purine metabolism; AMP biosynthesis via salvage pathway; AMP from adenine: step 1/1. Its function is as follows. Catalyzes a salvage reaction resulting in the formation of AMP, that is energically less costly than de novo synthesis. The chain is Adenine phosphoribosyltransferase 1 from Saccharomyces cerevisiae (strain ATCC 204508 / S288c) (Baker's yeast).